A 311-amino-acid chain; its full sequence is Oxygen-dependent coproporphyrinogen-III oxidase (311 aa).

Residue Ser100 participates in substrate binding. A divalent metal cation is bound by residues His104 and His114. Residue His114 is the Proton donor of the active site. Substrate is bound at residue 116 to 118 (NVR). 2 residues coordinate a divalent metal cation: His153 and His183. An important for dimerization region spans residues 248 to 283 (YAEFNLVYDRGTLFGLQSGGRTESILMSLPPIVHWE). 266–268 (GGR) contacts substrate.

Belongs to the aerobic coproporphyrinogen-III oxidase family. In terms of assembly, homodimer. It depends on a divalent metal cation as a cofactor.

It is found in the cytoplasm. The enzyme catalyses coproporphyrinogen III + O2 + 2 H(+) = protoporphyrinogen IX + 2 CO2 + 2 H2O. The protein operates within porphyrin-containing compound metabolism; protoporphyrin-IX biosynthesis; protoporphyrinogen-IX from coproporphyrinogen-III (O2 route): step 1/1. Functionally, involved in the heme biosynthesis. Catalyzes the aerobic oxidative decarboxylation of propionate groups of rings A and B of coproporphyrinogen-III to yield the vinyl groups in protoporphyrinogen-IX. The chain is Oxygen-dependent coproporphyrinogen-III oxidase from Legionella pneumophila (strain Corby).